A 174-amino-acid polypeptide reads, in one-letter code: Tat proofreading chaperone TtrD (174 aa).

Belongs to the TorD/DmsD family. As to quaternary structure, monomer.

It is found in the cytoplasm. In terms of biological role, binds specifically to the Tat signal peptide of the TtrA subunit of the tetrathionate reductase. The polypeptide is Tat proofreading chaperone TtrD (ttrD) (Archaeoglobus fulgidus (strain ATCC 49558 / DSM 4304 / JCM 9628 / NBRC 100126 / VC-16)).